The primary structure comprises 155 residues: SsrA-binding protein (155 aa).

Belongs to the SmpB family.

It localises to the cytoplasm. In terms of biological role, required for rescue of stalled ribosomes mediated by trans-translation. Binds to transfer-messenger RNA (tmRNA), required for stable association of tmRNA with ribosomes. tmRNA and SmpB together mimic tRNA shape, replacing the anticodon stem-loop with SmpB. tmRNA is encoded by the ssrA gene; the 2 termini fold to resemble tRNA(Ala) and it encodes a 'tag peptide', a short internal open reading frame. During trans-translation Ala-aminoacylated tmRNA acts like a tRNA, entering the A-site of stalled ribosomes, displacing the stalled mRNA. The ribosome then switches to translate the ORF on the tmRNA; the nascent peptide is terminated with the 'tag peptide' encoded by the tmRNA and targeted for degradation. The ribosome is freed to recommence translation, which seems to be the essential function of trans-translation. The chain is SsrA-binding protein from Geobacillus sp. (strain WCH70).